We begin with the raw amino-acid sequence, 430 residues long: Trigger factor (430 aa).

Residues 164 to 249 enclose the PPIase FKBP-type domain; sequence DDWAVIDHEG…LKALKTRQLP (86 aa).

The protein belongs to the FKBP-type PPIase family. Tig subfamily.

It localises to the cytoplasm. The catalysed reaction is [protein]-peptidylproline (omega=180) = [protein]-peptidylproline (omega=0). Its function is as follows. Involved in protein export. Acts as a chaperone by maintaining the newly synthesized protein in an open conformation. Functions as a peptidyl-prolyl cis-trans isomerase. This Anaeromyxobacter sp. (strain Fw109-5) protein is Trigger factor.